A 182-amino-acid chain; its full sequence is MGSVSSRGHRAEAQVVMMGLDSAGKTTLLYRLKGYQLVETLPTVGFNVEPLEEPGHVSLTLWDVGGQSQLRASWKDHLEGTDILVYVLDSTDEARLPEAVAELREVLDDPSVASVPLLVLANKQEVPQALSLPEIRDRLGLQGFLGRSWDLRACSALTGAGLPEALESLRSLLKSCSLCMAR.

The N-myristoyl glycine moiety is linked to residue glycine 2. Residues 19–26 (GLDSAGKT), 63–67 (DVGGQ), and 122–125 (NKQE) contribute to the GTP site.

This sequence belongs to the small GTPase superfamily. Arf family.

Functionally, may play a role in apoptosis. May act as a tumor suppressor. The chain is ADP-ribosylation factor-like protein 11 (ARL11) from Bos taurus (Bovine).